The primary structure comprises 193 residues: Large ribosomal subunit protein uL5 (193 aa).

Belongs to the universal ribosomal protein uL5 family. Part of the 50S ribosomal subunit; part of the 5S rRNA/L5/L18/L25 subcomplex. Contacts the 5S rRNA and the P site tRNA. Forms a bridge to the 30S subunit in the 70S ribosome.

In terms of biological role, this is one of the proteins that bind and probably mediate the attachment of the 5S RNA into the large ribosomal subunit, where it forms part of the central protuberance. In the 70S ribosome it contacts protein S13 of the 30S subunit (bridge B1b), connecting the 2 subunits; this bridge is implicated in subunit movement. Contacts the P site tRNA; the 5S rRNA and some of its associated proteins might help stabilize positioning of ribosome-bound tRNAs. This chain is Large ribosomal subunit protein uL5, found in Corynebacterium urealyticum (strain ATCC 43042 / DSM 7109).